The primary structure comprises 226 residues: Nucleoside triphosphate pyrophosphatase (226 aa).

Aspartate 79 serves as the catalytic Proton acceptor. The tract at residues 204–226 (WSRGTSTHPTPGTSATPKPNPGA) is disordered. Positions 206 to 220 (RGTSTHPTPGTSATP) are enriched in polar residues.

The protein belongs to the Maf family. A divalent metal cation is required as a cofactor.

It is found in the cytoplasm. The enzyme catalyses a ribonucleoside 5'-triphosphate + H2O = a ribonucleoside 5'-phosphate + diphosphate + H(+). The catalysed reaction is a 2'-deoxyribonucleoside 5'-triphosphate + H2O = a 2'-deoxyribonucleoside 5'-phosphate + diphosphate + H(+). Its function is as follows. Nucleoside triphosphate pyrophosphatase. May have a dual role in cell division arrest and in preventing the incorporation of modified nucleotides into cellular nucleic acids. This chain is Nucleoside triphosphate pyrophosphatase, found in Salinispora tropica (strain ATCC BAA-916 / DSM 44818 / JCM 13857 / NBRC 105044 / CNB-440).